The primary structure comprises 898 residues: Vacuolar membrane protease (898 aa).

Topologically, residues 1–14 (MGIVDYLVAAVSFR) are cytoplasmic. The chain crosses the membrane as a helical span at residues 15–35 (TLPTTFVAVLVYLAIFISVLI). The Vacuolar segment spans residues 36–342 (TDELPATPKD…LFGQALIVFP (307 aa)). Asn-50, Asn-103, and Asn-110 each carry an N-linked (GlcNAc...) asparagine glycan. Residues His-139 and Asp-151 each contribute to the Zn(2+) site. The active-site Proton acceptor is the Glu-183. Glu-184 contributes to the Zn(2+) binding site. Asn-200 is a glycosylation site (N-linked (GlcNAc...) asparagine). Glu-209 and His-284 together coordinate Zn(2+). A helical transmembrane segment spans residues 343 to 365 (LSAMITFNIVFLVVGPIMLALLV). Residues 366-411 (TFDIVARHRRQEMIGGGYEEQGFFARAWTSFKSFRWVGGFWKHAKF) lie on the Cytoplasmic side of the membrane. Residues 412–432 (WVALAVTVGLQVLLCVGYLYI) traverse the membrane as a helical segment. Asn-433 is a topological domain (vacuolar). A helical membrane pass occupies residues 434–454 (PLIAYSSSHIVLLSFLSLAYL). The Cytoplasmic portion of the chain corresponds to 455–479 (STYLVHNIPSPTDTYGSHLPEQQKQ). Residues 480 to 500 (AALFQLYFFTWILLLAATVVG) traverse the membrane as a helical segment. The Vacuolar portion of the chain corresponds to 501 to 509 (AKLSVGSFY). A helical membrane pass occupies residues 510-530 (ILSLWNAVLFAACAIGSIAGL). Residues 531–593 (LSSHTVEGDA…PGGKEGEEVS (63 aa)) lie on the Cytoplasmic side of the membrane. A helical membrane pass occupies residues 594–614 (GAIGWWFVQFVLSVPAVVILV). Over 615-635 (SQLALLMLAATEQTLADGSPA) the chain is Vacuolar. Residues 636 to 656 (VTVYGGASLMSVLAILPLAPF) traverse the membrane as a helical segment. At 657–664 (ACKLHRRV) the chain is on the cytoplasmic side. A helical membrane pass occupies residues 665–685 (AYVALVVLIASTAYAWLVFPF). The Vacuolar segment spans residues 686–898 (SERAPLKVFF…LVEGYKAFAV (213 aa)). Asn-704, Asn-733, and Asn-764 each carry an N-linked (GlcNAc...) asparagine glycan.

It belongs to the peptidase M28 family. The cofactor is Zn(2+).

It localises to the vacuole membrane. May be involved in vacuolar sorting and osmoregulation. The protein is Vacuolar membrane protease of Schizophyllum commune (strain H4-8 / FGSC 9210) (Split gill fungus).